Consider the following 67-residue polypeptide: Surface composition regulator (67 aa).

This sequence belongs to the GlgS family.

Its function is as follows. Major determinant of cell surface composition. Negatively regulates motility, adhesion and synthesis of biofilm exopolysaccharides. The chain is Surface composition regulator from Salmonella enteritidis PT4 (strain P125109).